The sequence spans 270 residues: Putative pyruvate, phosphate dikinase regulatory protein (270 aa).

151 to 158 (GVSRTSKT) lines the ADP pocket.

This sequence belongs to the pyruvate, phosphate/water dikinase regulatory protein family. PDRP subfamily.

It catalyses the reaction N(tele)-phospho-L-histidyl/L-threonyl-[pyruvate, phosphate dikinase] + ADP = N(tele)-phospho-L-histidyl/O-phospho-L-threonyl-[pyruvate, phosphate dikinase] + AMP + H(+). The catalysed reaction is N(tele)-phospho-L-histidyl/O-phospho-L-threonyl-[pyruvate, phosphate dikinase] + phosphate + H(+) = N(tele)-phospho-L-histidyl/L-threonyl-[pyruvate, phosphate dikinase] + diphosphate. Bifunctional serine/threonine kinase and phosphorylase involved in the regulation of the pyruvate, phosphate dikinase (PPDK) by catalyzing its phosphorylation/dephosphorylation. The polypeptide is Putative pyruvate, phosphate dikinase regulatory protein (Streptococcus gordonii (strain Challis / ATCC 35105 / BCRC 15272 / CH1 / DL1 / V288)).